A 325-amino-acid chain; its full sequence is Brain mitochondrial carrier protein 1 (325 aa).

6 helical membrane-spanning segments follow: residues 38 to 54, 112 to 128, 141 to 161, 199 to 215, 240 to 256, and 298 to 315; these read GLNW…SIVA, LRQA…YQSL, LLIN…IANP, GVVP…GVEL, VSSF…SNPV, and GFWP…IFFI. 3 Solcar repeats span residues 42-131, 139-224, and 233-323; these read KPFV…LKRL, ETLL…TKKH, and DTIL…LKRL.

Belongs to the mitochondrial carrier (TC 2.A.29) family. As to quaternary structure, homotetramer. As to expression, mainly expressed in brain. Some expression in testis and pituitary.

It is found in the mitochondrion inner membrane. The catalysed reaction is sulfite(in) + sulfate(out) = sulfite(out) + sulfate(in). It carries out the reaction thiosulfate(in) + sulfate(out) = thiosulfate(out) + sulfate(in). The enzyme catalyses sulfate(out) + phosphate(in) = sulfate(in) + phosphate(out). It catalyses the reaction oxalate(in) + sulfate(out) = oxalate(out) + sulfate(in). The catalysed reaction is malonate(in) + sulfate(out) = malonate(out) + sulfate(in). It carries out the reaction maleate(in) + sulfate(out) = maleate(out) + sulfate(in). The enzyme catalyses (S)-malate(in) + sulfate(out) = (S)-malate(out) + sulfate(in). It catalyses the reaction (3S)-citramalate(in) + sulfate(out) = (3S)-citramalate(out) + sulfate(in). The catalysed reaction is (3R)-citramalate(in) + sulfate(out) = (3R)-citramalate(out) + sulfate(in). It carries out the reaction sulfate(out) + succinate(in) = sulfate(in) + succinate(out). The enzyme catalyses (S,S)-tartrate(in) + sulfate(out) = (S,S)-tartrate(out) + sulfate(in). It catalyses the reaction (2R,3R)-tartrate(in) + sulfate(out) = (2R,3R)-tartrate(out) + sulfate(in). The catalysed reaction is D-aspartate(in) + sulfate(out) = D-aspartate(out) + sulfate(in). It carries out the reaction L-aspartate(in) + sulfate(out) = L-aspartate(out) + sulfate(in). The enzyme catalyses sulfate(in) = sulfate(out). It catalyses the reaction phosphate(in) = phosphate(out). The catalysed reaction is (S)-malate(out) = (S)-malate(in). It carries out the reaction citrate(in) = citrate(out). The enzyme catalyses L-aspartate(out) = L-aspartate(in). It catalyses the reaction L-glutamate(out) = L-glutamate(in). The catalysed reaction is H(+)(in) = H(+)(out). It carries out the reaction chloride(in) = chloride(out). With respect to regulation, increased activity at pH lower than 8.0. sulfate/sulfate exchange activity is inhibited strongly by pyridoxal 5'-phosphate, bathophenanthroline and the organic mercurials mersalyl, p-chloromercuribenzoate and HgCl2. Proton conductance is activated by cardiolipin and long-chain free fatty acids and inhibited by purine nucleotides ATP and ADP. Chloride ion transporter activity is inhibited by long-chain free fatty acids. Its function is as follows. Transports inorganic anions (sulfate, sulfite, thiosulfate and phosphate) and, to a lesser extent, a variety of dicarboxylates (e.g. malonate, malate and citramalate) and, even more so, aspartate and glutamate and tricarboxylates. May catalyze the export of sulfite and thiosulfate (the hydrogen sulfide degradation products) from the mitochondria, thereby modulating the level of the hydrogen sulfide. Also can mediate a very low unidirectional transport of anions including sulfate, phosphate, (S)-malate, citrate, L-aspartate and L-glutamate. Maintains oxidative balance (through uncoupling activities) and ATP production (by modifying mitochondrial membrane potential). Is able to transport protons across lipid membranes. Also exhibits transmembrane chloride transport activity to a lesser extent. May modify mitochondrial respiratory efficiency and mitochondrial oxidant production. This Homo sapiens (Human) protein is Brain mitochondrial carrier protein 1.